The chain runs to 1009 residues: Protein-tyrosine kinase 2-beta (1009 aa).

The FERM domain occupies 39–359 (RILKVCFYSN…GYCRLQGEHQ (321 aa)). Phosphoserine is present on residues Ser-361, Ser-375, and Ser-399. At Tyr-402 the chain carries Phosphotyrosine; by autocatalysis. A Protein kinase domain is found at 425–683 (VVLNRILGEG…ELVCSLSDVY (259 aa)). Residues 431-439 (LGEGFFGEV), Lys-457, and 503-509 (ELYPYGE) contribute to the ATP site. The active-site Proton acceptor is Asp-549. Position 579 is a phosphotyrosine (Tyr-579). Position 580 is a phosphotyrosine; by SRC, FYN and LCK (Tyr-580). A disordered region spans residues 701–725 (TPKILEPTAFQEPPPKPSRPKYRPP). A compositionally biased stretch (pro residues) spans 712–725 (EPPPKPSRPKYRPP). Position 722 is a phosphotyrosine (Tyr-722). A Phosphoserine modification is found at Ser-762. Position 765 is a phosphothreonine (Thr-765). Residues 801 to 1009 (KVKMRQILDK…LANLAHPPAE (209 aa)) are interaction with TGFB1I1. Phosphotyrosine occurs at positions 819 and 834. Residue Ser-839 is modified to Phosphoserine. A Phosphothreonine modification is found at Thr-842. Residue Tyr-849 is modified to Phosphotyrosine. Residue Ser-866 is modified to Phosphoserine. Residues 868 to 1009 (QPTANLDRTD…LANLAHPPAE (142 aa)) are focal adhesion targeting (FAT). Position 881 is a phosphotyrosine; by SRC (Tyr-881).

The protein belongs to the protein kinase superfamily. Tyr protein kinase family. FAK subfamily. As to quaternary structure, homodimer, or homooligomer. Interacts with SIRPA and SH2D3C. Interacts with ARHGAP10. Interacts with DLG4. Interacts with KCNA2. Interacts with NPHP1, ASAP1, ASAP2, ARHGAP26, SKAP2 and TGFB1I1. The Tyr-402 phosphorylated form interacts with SRC (via SH2 domain) and SRC family members. Forms a signaling complex with EPHA1, LCK and phosphatidylinositol 3-kinase; upon activation by EFNA1. Interacts with GRB2 (via SH2 domain). Interacts with P53/TP53 and MDM2. Interacts with MYLK. Interacts with BCAR1. Interacts with PDPK1. Interacts (hypophosphorylated) with PXN. Interacts with RB1CC1. Interacts with RHOU. Interacts with VAV1. Interacts with LPXN and PTPN12. Phosphorylated on tyrosine residues in response to various stimuli that elevate the intracellular calcium concentration; this activation is indirect and may be mediated by production of reactive oxygen species (ROS). Tyr-402 is the major autophosphorylation site, but other kinases can also phosphorylate Tyr-402. Autophosphorylation occurs in trans, i.e. one subunit of the dimeric receptor phosphorylates tyrosine residues on the other subunit. Phosphorylation at Tyr-402 promotes interaction with SRC and SRC family members, leading to phosphorylation at Tyr-579; Tyr-580 and Tyr-881. Phosphorylation at Tyr-881 is important for interaction with GRB2. Phosphorylated on tyrosine residues upon activation of FGR and PKC. Recruitment by NPHP1 to cell matrix adhesions initiates Tyr-402 phosphorylation. In monocytes, adherence to substrata is required for tyrosine phosphorylation and kinase activation. Angiotensin II, thapsigargin and L-alpha-lysophosphatidic acid (LPA) also induce autophosphorylation and increase kinase activity. Phosphorylation by MYLK promotes ITGB2 activation and is thus essential to trigger neutrophil transmigration during lung injury. Dephosphorylated by PTPN12. Most abundant in the brain, with highest levels in amygdala and hippocampus. Low levels in kidney (at protein level). Also expressed in spleen and lymphocytes.

Its subcellular location is the cytoplasm. The protein resides in the perinuclear region. The protein localises to the cell membrane. It is found in the cell junction. It localises to the focal adhesion. Its subcellular location is the cell projection. The protein resides in the lamellipodium. The protein localises to the cell cortex. It is found in the nucleus. The enzyme catalyses L-tyrosyl-[protein] + ATP = O-phospho-L-tyrosyl-[protein] + ADP + H(+). Its activity is regulated as follows. Activated in response to stimuli that lead to increased intracellular Ca(2+) levels; this activation is indirect and may be mediated by calcium-mediated production of reactive oxygen species (ROS). Activated by autophosphorylation at Tyr-402; this creates a binding site for SRC family kinases and leads to phosphorylation at additional tyrosine residues. Phosphorylation at Tyr-402, Tyr-579 and Tyr-580 is required for optimal kinase activity. Inhibited by PF-562,271, BIRB796, PF-4618433 and by PF-431396, PF-2318841 and their derivatives. Inhibited by sulfoximine-substituted trifluoromethylpyrimidines. Inhibited by 4-amino and 5-aryl substituted pyridinone compounds. Functionally, non-receptor protein-tyrosine kinase that regulates reorganization of the actin cytoskeleton, cell polarization, cell migration, adhesion, spreading and bone remodeling. Plays a role in the regulation of the humoral immune response, and is required for normal levels of marginal B-cells in the spleen and normal migration of splenic B-cells. Required for normal macrophage polarization and migration towards sites of inflammation. Regulates cytoskeleton rearrangement and cell spreading in T-cells, and contributes to the regulation of T-cell responses. Promotes osteoclastic bone resorption; this requires both PTK2B/PYK2 and SRC. May inhibit differentiation and activity of osteoprogenitor cells. Functions in signaling downstream of integrin and collagen receptors, immune receptors, G-protein coupled receptors (GPCR), cytokine, chemokine and growth factor receptors, and mediates responses to cellular stress. Forms multisubunit signaling complexes with SRC and SRC family members upon activation; this leads to the phosphorylation of additional tyrosine residues, creating binding sites for scaffold proteins, effectors and substrates. Regulates numerous signaling pathways. Promotes activation of phosphatidylinositol 3-kinase and of the AKT1 signaling cascade. Promotes activation of NOS3. Regulates production of the cellular messenger cGMP. Promotes activation of the MAP kinase signaling cascade, including activation of MAPK1/ERK2, MAPK3/ERK1 and MAPK8/JNK1. Promotes activation of Rho family GTPases, such as RHOA and RAC1. Recruits the ubiquitin ligase MDM2 to P53/TP53 in the nucleus, and thereby regulates P53/TP53 activity, P53/TP53 ubiquitination and proteasomal degradation. Acts as a scaffold, binding to both PDPK1 and SRC, thereby allowing SRC to phosphorylate PDPK1 at 'Tyr-9, 'Tyr-373', and 'Tyr-376'. Promotes phosphorylation of NMDA receptors by SRC family members, and thereby contributes to the regulation of NMDA receptor ion channel activity and intracellular Ca(2+) levels. May also regulate potassium ion transport by phosphorylation of potassium channel subunits. Phosphorylates SRC; this increases SRC kinase activity. Phosphorylates ASAP1, NPHP1, KCNA2 and SHC1. Promotes phosphorylation of ASAP2, RHOU and PXN; this requires both SRC and PTK2/PYK2. The polypeptide is Protein-tyrosine kinase 2-beta (PTK2B) (Homo sapiens (Human)).